The sequence spans 440 residues: Serine/threonine-protein kinase VRK1 (440 aa).

The Protein kinase domain maps to 37 to 317 (WKLGLPIGQG…LLEYTEKPLY (281 aa)). Residues 43–51 (IGQGGFGCI) and K71 contribute to the ATP site. K71 participates in a covalent cross-link: Glycyl lysine isopeptide (Lys-Gly) (interchain with G-Cter in SUMO2). The active-site Proton acceptor is the D177. S342 carries the phosphoserine; by PLK3 modification. S376 carries the post-translational modification Phosphoserine. Residue T378 is modified to Phosphothreonine. Composition is skewed to polar residues over residues 379-391 (QVQE…SVES) and 398-410 (SMSQ…SSSD). The tract at residues 379–440 (QVQEAAQTRS…GSRTRKKAQK (62 aa)) is disordered. The interval 387–393 (RSVESQG) is required for interaction with the nucleosome.

It belongs to the protein kinase superfamily. CK1 Ser/Thr protein kinase family. VRK subfamily. In terms of assembly, interacts with HDAC1, KAT2B, SETDB1, KDM3A and KDM4A. Associates with the nucleosome through interactions with nucleosome DNA, histone H2A and histone H2B; the interaction with H2A and H2B is mediated by the nucleosome acidic patch, a cluster of negatively charged residues of H2A and H2B forming a cleft within the nucleosome core. Post-translationally, autophosphorylated at various serine and threonine residues. Autophosphorylation does not impair its ability to phosphorylate p53/TP53. Phosphorylation by PLK3 leads to induction of Golgi fragmentation during mitosis. As to expression, highly expressed in testis. Expressed in liver, kidney and muscle. Weakly expressed in thymus, bone marrow and spleen.

It is found in the nucleus. The protein resides in the cytoplasm. The protein localises to the cajal body. It catalyses the reaction L-seryl-[protein] + ATP = O-phospho-L-seryl-[protein] + ADP + H(+). The catalysed reaction is L-threonyl-[protein] + ATP = O-phospho-L-threonyl-[protein] + ADP + H(+). Its activity is regulated as follows. Active in presence of Mn(2+), Mg(2+) and Zn(2+), but is not functional with Ca(2+) or Cu(2+). Has a higher affinity for Mn(2+) than for Mg(2+). RAN inhibits its autophosphorylation and its ability to phosphorylate histone H3. Its function is as follows. Serine/threonine kinase involved in the regulation of key cellular processes including the cell cycle, nuclear condensation, transcription regulation, and DNA damage response. Controls chromatin organization and remodeling by mediating phosphorylation of histone H3 on 'Thr-4' and histone H2AX (H2aXT4ph). It also phosphorylates KAT5 in response to DNA damage, promoting KAT5 association with chromatin and histone acetyltransferase activity. Is involved in the regulation of cell cycle progression of neural progenitors, and is required for proper cortical neuronal migration. Is involved in neurite elongation and branching in motor neurons, and has an essential role in Cajal bodies assembly, acting through COIL phosphorylation and the control of coilin degradation. Involved in Golgi disassembly during the cell cycle: following phosphorylation by PLK3 during mitosis, required to induce Golgi fragmentation. Phosphorylates BANF1: disrupts its ability to bind DNA, reduces its binding to LEM domain-containing proteins and causes its relocalization from the nucleus to the cytoplasm. Phosphorylates TP53BP1 and p53/TP53 on 'Thr-18', preventing the interaction between p53/TP53 and MDM2. Phosphorylates ATF2 which activates its transcriptional activity. Phosphorylates JUN. The sequence is that of Serine/threonine-protein kinase VRK1 from Mus musculus (Mouse).